The following is a 122-amino-acid chain: Large ribosomal subunit protein uL14 (122 aa).

Belongs to the universal ribosomal protein uL14 family. As to quaternary structure, part of the 50S ribosomal subunit. Forms a cluster with proteins L3 and L19. In the 70S ribosome, L14 and L19 interact and together make contacts with the 16S rRNA in bridges B5 and B8.

Functionally, binds to 23S rRNA. Forms part of two intersubunit bridges in the 70S ribosome. This Rhizobium meliloti (strain 1021) (Ensifer meliloti) protein is Large ribosomal subunit protein uL14.